A 481-amino-acid chain; its full sequence is RuvB-like helicase 2 (481 aa).

76-83 (GPPSTGKT) provides a ligand contact to ATP.

This sequence belongs to the RuvB family. As to quaternary structure, may form heterododecamers with hel-1/rvb1. Component of the SWR1 chromatin remodeling complex, the INO80 chromatin remodeling complex, and of the R2TP complex.

The protein localises to the nucleus. The catalysed reaction is ATP + H2O = ADP + phosphate + H(+). Its function is as follows. DNA helicase which participates in several chromatin remodeling complexes, including the SWR1 and the INO80 complexes. The SWR1 complex mediates the ATP-dependent exchange of histone H2A for the H2A variant H2A.Z leading to transcriptional regulation of selected genes by chromatin remodeling. The INO80 complex remodels chromatin by shifting nucleosomes and is involved in DNA repair. Also involved in pre-rRNA processing. The polypeptide is RuvB-like helicase 2 (hel-2) (Neurospora crassa (strain ATCC 24698 / 74-OR23-1A / CBS 708.71 / DSM 1257 / FGSC 987)).